We begin with the raw amino-acid sequence, 414 residues long: Isocitrate dehydrogenase [NADP] cytoplasmic (414 aa).

S2 is modified (N-acetylserine). The residue at position 42 (Y42) is a Phosphotyrosine. 75-77 (TIT) provides a ligand contact to NADP(+). T77 contributes to the substrate binding site. The residue at position 81 (K81) is an N6-acetyllysine. R82 lines the NADP(+) pocket. Residues 94 to 100 (SPNGTIR) and R109 contribute to the substrate site. K126 carries the post-translational modification N6-succinyllysine. Substrate is bound by residues R132 and K212. Residues K224, K233, and K243 each carry the N6-acetyllysine modification. D252 is a binding site for Mn(2+). Residue K260 coordinates NADP(+). 2 residues coordinate Mn(2+): D275 and D279. 310-315 (GTVTRH) lines the NADP(+) pocket. K321 is modified (N6-acetyllysine). N328 contributes to the NADP(+) binding site. S389 is modified (phosphoserine). K400 is subject to N6-succinyllysine.

Belongs to the isocitrate and isopropylmalate dehydrogenases family. In terms of assembly, homodimer. Requires Mg(2+) as cofactor. Mn(2+) is required as a cofactor. Post-translationally, acetylation at Lys-374 dramatically reduces catalytic activity.

Its subcellular location is the cytoplasm. The protein resides in the cytosol. It localises to the peroxisome. It carries out the reaction D-threo-isocitrate + NADP(+) = 2-oxoglutarate + CO2 + NADPH. Its function is as follows. Catalyzes the NADP(+)-dependent oxidative decarboxylation of isocitrate (D-threo-isocitrate) to 2-ketoglutarate (2-oxoglutarate), which is required by other enzymes such as the phytanoyl-CoA dioxygenase. Plays a critical role in the generation of NADPH, an important cofactor in many biosynthesis pathways. May act as a corneal epithelial crystallin and may be involved in maintaining corneal epithelial transparency. This is Isocitrate dehydrogenase [NADP] cytoplasmic (IDH1) from Homo sapiens (Human).